A 319-amino-acid polypeptide reads, in one-letter code: Plasmodesmata-located protein 4 (319 aa).

A signal peptide spans 1–26; that stretch reads MVVHLISLLTQTLALIILSLPSIINT. The Extracellular portion of the chain corresponds to 27–288; sequence SQLDYDTLVF…EGSKVNTGKS (262 aa). Cystine bridges form between cysteine 39–cysteine 127, cysteine 103–cysteine 112, cysteine 115–cysteine 140, cysteine 177–cysteine 247, cysteine 223–cysteine 232, and cysteine 235–cysteine 260. Gnk2-homologous domains lie at 45-149 and 170-269; these read NILQ…FERI and HGLI…YHPH. The helical transmembrane segment at 289–309 threads the bilayer; that stretch reads LAIVVGGVAALVFVAIFFMFL. The necessary and sufficient for plasmodesmal targeting stretch occupies residues 289 to 309; that stretch reads LAIVVGGVAALVFVAIFFMFL. Residues 310–319 are Cytoplasmic-facing; the sequence is KSLRKKGDDC.

The protein belongs to the cysteine-rich repeat secretory protein family. Plasmodesmata-located proteins (PDLD) subfamily. (Microbial infection) Interacts with Grapevine fanleaf virus (GFLV) 2B-MP. As to expression, highly expressed in seeds and roots.

The protein resides in the cell membrane. The protein localises to the cell junction. It is found in the plasmodesma. Modulates cell-to-cell trafficking. This is Plasmodesmata-located protein 4 from Arabidopsis thaliana (Mouse-ear cress).